The sequence spans 1368 residues: DNA-directed RNA polymerase subunit beta (1368 aa).

This sequence belongs to the RNA polymerase beta chain family. The RNAP catalytic core consists of 2 alpha, 1 beta, 1 beta' and 1 omega subunit. When a sigma factor is associated with the core the holoenzyme is formed, which can initiate transcription.

It carries out the reaction RNA(n) + a ribonucleoside 5'-triphosphate = RNA(n+1) + diphosphate. DNA-dependent RNA polymerase catalyzes the transcription of DNA into RNA using the four ribonucleoside triphosphates as substrates. This Paraburkholderia phytofirmans (strain DSM 17436 / LMG 22146 / PsJN) (Burkholderia phytofirmans) protein is DNA-directed RNA polymerase subunit beta.